Consider the following 242-residue polypeptide: 1-(5-phosphoribosyl)-5-[(5-phosphoribosylamino)methylideneamino] imidazole-4-carboxamide isomerase (242 aa).

The active-site Proton acceptor is the Asp-8. The Proton donor role is filled by Asp-129.

The protein belongs to the HisA/HisF family.

It is found in the cytoplasm. The enzyme catalyses 1-(5-phospho-beta-D-ribosyl)-5-[(5-phospho-beta-D-ribosylamino)methylideneamino]imidazole-4-carboxamide = 5-[(5-phospho-1-deoxy-D-ribulos-1-ylimino)methylamino]-1-(5-phospho-beta-D-ribosyl)imidazole-4-carboxamide. It functions in the pathway amino-acid biosynthesis; L-histidine biosynthesis; L-histidine from 5-phospho-alpha-D-ribose 1-diphosphate: step 4/9. This is 1-(5-phosphoribosyl)-5-[(5-phosphoribosylamino)methylideneamino] imidazole-4-carboxamide isomerase from Clostridium botulinum (strain Langeland / NCTC 10281 / Type F).